Reading from the N-terminus, the 233-residue chain is Cytochrome c oxidase subunit 3 (233 aa).

4 helical membrane passes run 62-82 (VVLFLVAESAIFLGLFTAYLI), 98-118 (LELLLPGVNSIILISSSFVMH), 135-155 (WFGITAAMGIIFLAGQMYEYF), and 172-192 (VLTGFHGLHVTFGLLLILSVL).

The protein belongs to the cytochrome c oxidase subunit 3 family.

It is found in the cell membrane. The catalysed reaction is 4 Fe(II)-[cytochrome c] + O2 + 8 H(+)(in) = 4 Fe(III)-[cytochrome c] + 2 H2O + 4 H(+)(out). The chain is Cytochrome c oxidase subunit 3 (ctaE) from Synechocystis sp. (strain ATCC 27184 / PCC 6803 / Kazusa).